A 427-amino-acid polypeptide reads, in one-letter code: Adenylosuccinate synthetase (427 aa).

GTP is bound by residues 12–18 (GDEGKGK) and 40–42 (GHT). D13 acts as the Proton acceptor in catalysis. Mg(2+) is bound by residues D13 and G40. IMP is bound by residues 13-16 (DEGK), 38-41 (NAGH), T128, R142, Q223, T238, and R302. Catalysis depends on H41, which acts as the Proton donor. Residue 298 to 304 (TTTGRPR) coordinates substrate. GTP contacts are provided by residues R304, 330–332 (SID), and 412–414 (SVG).

It belongs to the adenylosuccinate synthetase family. As to quaternary structure, homodimer. The cofactor is Mg(2+).

The protein localises to the cytoplasm. The catalysed reaction is IMP + L-aspartate + GTP = N(6)-(1,2-dicarboxyethyl)-AMP + GDP + phosphate + 2 H(+). It functions in the pathway purine metabolism; AMP biosynthesis via de novo pathway; AMP from IMP: step 1/2. In terms of biological role, plays an important role in the de novo pathway of purine nucleotide biosynthesis. Catalyzes the first committed step in the biosynthesis of AMP from IMP. In Staphylococcus aureus (strain N315), this protein is Adenylosuccinate synthetase.